The sequence spans 544 residues: Formate--tetrahydrofolate ligase (544 aa).

63–70 (TPAGEGKS) is an ATP binding site.

It belongs to the formate--tetrahydrofolate ligase family.

The enzyme catalyses (6S)-5,6,7,8-tetrahydrofolate + formate + ATP = (6R)-10-formyltetrahydrofolate + ADP + phosphate. Its pathway is one-carbon metabolism; tetrahydrofolate interconversion. The chain is Formate--tetrahydrofolate ligase from Fusobacterium nucleatum subsp. nucleatum (strain ATCC 25586 / DSM 15643 / BCRC 10681 / CIP 101130 / JCM 8532 / KCTC 2640 / LMG 13131 / VPI 4355).